The following is a 500-amino-acid chain: Glutamate--tRNA ligase (500 aa).

Residues 13–23 carry the 'HIGH' region motif; that stretch reads PSPTGTPHVGM. The 'KMSKS' region signature appears at 258-262; the sequence is KLSKR. Position 261 (Lys-261) interacts with ATP.

Belongs to the class-I aminoacyl-tRNA synthetase family. Glutamate--tRNA ligase type 1 subfamily. As to quaternary structure, monomer.

Its subcellular location is the cytoplasm. The enzyme catalyses tRNA(Glu) + L-glutamate + ATP = L-glutamyl-tRNA(Glu) + AMP + diphosphate. In terms of biological role, catalyzes the attachment of glutamate to tRNA(Glu) in a two-step reaction: glutamate is first activated by ATP to form Glu-AMP and then transferred to the acceptor end of tRNA(Glu). The protein is Glutamate--tRNA ligase of Corynebacterium jeikeium (strain K411).